The chain runs to 260 residues: MSQRTRLSVNVNKIAVLRNSRGHGAPDVIRAASACIDAGAHGITVHPRPDARHIRHDDVIRLSALTRARGVEFNIEGNPFAEPRAGYCGLLALCRETRPHQVTLVPDGDQQITSDHGFDFAREGPGLRPLIDEIKQWGCRVSLFVDVNVTGLADAAIWGVDRIELYTGPYAEMHHAGCSDAVLREFATTARLAQDVGLGVNAGHDLSQTNLGVFLGAVPDVLEVSIGHALISEALYEGLIPTVRRYLDILDSVNPAVSMR.

3-amino-2-oxopropyl phosphate contacts are provided by N10 and R21. H46 (proton acceptor) is an active-site residue. The 1-deoxy-D-xylulose 5-phosphate site is built by R48 and H53. The active-site Proton acceptor is the E76. Residue T113 coordinates 1-deoxy-D-xylulose 5-phosphate. H204 acts as the Proton donor in catalysis. 3-amino-2-oxopropyl phosphate is bound by residues D205 and 227 to 228 (GH).

It belongs to the PNP synthase family. In terms of assembly, homooctamer; tetramer of dimers.

Its subcellular location is the cytoplasm. The enzyme catalyses 3-amino-2-oxopropyl phosphate + 1-deoxy-D-xylulose 5-phosphate = pyridoxine 5'-phosphate + phosphate + 2 H2O + H(+). It functions in the pathway cofactor biosynthesis; pyridoxine 5'-phosphate biosynthesis; pyridoxine 5'-phosphate from D-erythrose 4-phosphate: step 5/5. Catalyzes the complicated ring closure reaction between the two acyclic compounds 1-deoxy-D-xylulose-5-phosphate (DXP) and 3-amino-2-oxopropyl phosphate (1-amino-acetone-3-phosphate or AAP) to form pyridoxine 5'-phosphate (PNP) and inorganic phosphate. This is Pyridoxine 5'-phosphate synthase from Xylella fastidiosa (strain M23).